A 195-amino-acid polypeptide reads, in one-letter code: Large ribosomal subunit protein uL5 (195 aa).

This sequence belongs to the universal ribosomal protein uL5 family. In terms of assembly, part of the 50S ribosomal subunit; part of the 5S rRNA/L5/L18/L25 subcomplex. Contacts the 5S rRNA and the P site tRNA. Forms a bridge to the 30S subunit in the 70S ribosome.

This is one of the proteins that bind and probably mediate the attachment of the 5S RNA into the large ribosomal subunit, where it forms part of the central protuberance. In the 70S ribosome it contacts protein S13 of the 30S subunit (bridge B1b), connecting the 2 subunits; this bridge is implicated in subunit movement. Contacts the P site tRNA; the 5S rRNA and some of its associated proteins might help stabilize positioning of ribosome-bound tRNAs. This is Large ribosomal subunit protein uL5 from Pelodictyon phaeoclathratiforme (strain DSM 5477 / BU-1).